A 95-amino-acid polypeptide reads, in one-letter code: Alpha-bungarotoxin, isoform A31 (95 aa).

A signal peptide spans 1–21; it reads MKTLLLTLVVVTIVCLDLGYT. 5 cysteine pairs are disulfide-bonded: C24–C44, C37–C65, C50–C54, C69–C80, and C81–C86.

It belongs to the three-finger toxin family. Long-chain subfamily. Type II alpha-neurotoxin sub-subfamily. Monomer in solution, homodimer in crystal state. Expressed by the venom gland.

It localises to the secreted. Functionally, binds with high affinity to muscular (tested on Torpedo marmorata, Kd=0.4 nM) and neuronal (tested on chimeric alpha-7/CHRNA7, Kd=0.95 nM) nicotinic acetylcholine receptor (nAChR) and inhibits acetylcholine from binding to the receptor, thereby impairing neuromuscular and neuronal transmission. It also shows an activity on GABA(A) receptors. It antagonises GABA-activated currents with high potency when tested on primary hippocampal neurons. It inhibits recombinantly expressed GABA(A) receptors composed of alpha-2-beta-2-gamma-2 (GABRA2-GABRB2-GABRG2) subunits with high potency (62.3% inhibition at 20 uM of toxin). It also shows a weaker inhibition on GABA(A) receptors composed of alpha-1-beta-2-gamma-2 (GABRA1-GABRB2-GABRG2) subunits, alpha-4-beta-2-gamma-2 (GABRA4-GABRB2-GABRG2) subunits, and alpha-5-beta-2-gamma-2 (GABRA5-GABRB2-GABRG2) subunits. A very weak inhibition is also observed on GABA(A) receptor composed of alpha-1-beta-3-gamma-2 (GABRA1-GABRB3-GABRG2). It has also been shown to bind and inhibit recombinant GABA(A) receptor beta-3/GABRB3 subunit (Kd=about 50 nM). In addition, it blocks the extracellular increase of dopamine evoked by nicotine only at the higher dose (4.2 uM). In vivo, when intraperitoneally injected into mice, induces flaccid paralysis of the limbs and respiratory distress, and causes death in a dose-dependent manner. This is Alpha-bungarotoxin, isoform A31 from Bungarus candidus (Malayan krait).